Consider the following 319-residue polypeptide: Acetyl esterase (319 aa).

Positions 91 to 93 (HGG) match the Involved in the stabilization of the negatively charged intermediate by the formation of the oxyanion hole motif. Active-site residues include Ser-165, Asp-262, and His-292.

It belongs to the 'GDXG' lipolytic enzyme family. As to quaternary structure, homodimer. Interacts with MalT and MelA.

It is found in the cytoplasm. Functionally, displays esterase activity towards short chain fatty esters (acyl chain length of up to 8 carbons). Able to hydrolyze triacetylglycerol (triacetin) and tributyrylglycerol (tributyrin), but not trioleylglycerol (triolein) or cholesterol oleate. Negatively regulates MalT activity by antagonizing maltotriose binding. Inhibits MelA galactosidase activity. The sequence is that of Acetyl esterase from Shigella flexneri serotype 5b (strain 8401).